Reading from the N-terminus, the 91-residue chain is Small ribosomal subunit protein bS18 (91 aa).

This sequence belongs to the bacterial ribosomal protein bS18 family. As to quaternary structure, part of the 30S ribosomal subunit. Forms a tight heterodimer with protein bS6.

Binds as a heterodimer with protein bS6 to the central domain of the 16S rRNA, where it helps stabilize the platform of the 30S subunit. The chain is Small ribosomal subunit protein bS18 from Wolbachia sp. subsp. Brugia malayi (strain TRS).